The sequence spans 380 residues: Protein Wnt-5a (380 aa).

Positions 1–37 (MKKPIGILSPGVALGTAGGAMSSKFFLMALATFFSFA) are cleaved as a signal peptide. A propeptide spanning residues 38–61 (QVVIEANSWWSLGMNNPVQMSEVY) is cleaved from the precursor. A disulfide bridge links Cys-104 with Cys-115. N-linked (GlcNAc...) asparagine glycans are attached at residues Asn-114 and Asn-120. 10 disulfides stabilise this stretch: Cys-154/Cys-162, Cys-164/Cys-182, Cys-238/Cys-252, Cys-240/Cys-247, Cys-309/Cys-340, Cys-325/Cys-335, Cys-339/Cys-379, Cys-355/Cys-370, Cys-357/Cys-367, and Cys-362/Cys-363. A lipid anchor (O-palmitoleoyl serine; by PORCN) is attached at Ser-244. N-linked (GlcNAc...) asparagine glycosylation is found at Asn-312 and Asn-326.

It belongs to the Wnt family. As to quaternary structure, forms a soluble 1:1 complex with AFM; this prevents oligomerization and is required for prolonged biological activity. The complex with AFM may represent the physiological form in body fluids. Homooligomer; disulfide-linked, leading to inactivation. Interacts with PORCN. Interacts with WLS. Interacts with glypican GCP3. Interacts with PKD1 (via extracellular domain). Interacts with TMEM67. Glycosylation is necessary for secretion but not for activity. Post-translationally, palmitoleoylation is required for efficient binding to frizzled receptors. Depalmitoleoylation leads to Wnt signaling pathway inhibition. In terms of processing, proteolytic processing by TIKI1 and TIKI2 promotes oxidation and formation of large disulfide-bond oligomers, leading to inactivation of WNT5A. As to expression, expressed in a gradient at the caudal end of the embryo during gastrulation and later in the distal-most aspect of several structures that extend from the body such as the limbs and genital tubercle.

The protein localises to the secreted. The protein resides in the extracellular space. Its subcellular location is the extracellular matrix. In terms of biological role, ligand for members of the frizzled family of seven transmembrane receptors. Can activate or inhibit canonical Wnt signaling, depending on receptor context. In the presence of FZD4, activates beta-catenin signaling. In the presence of ROR2, inhibits the canonical Wnt pathway by promoting beta-catenin degradation through a GSK3-independent pathway which involves down-regulation of beta-catenin-induced reporter gene expression. Suppression of the canonical pathway allows chondrogenesis to occur and inhibits tumor formation. Stimulates cell migration. Decreases proliferation, migration, invasiveness and clonogenicity of carcinoma cells and may act as a tumor suppressor. Mediates motility of melanoma cells. Required during embryogenesis for extension of the primary anterior-posterior axis and for outgrowth of limbs and the genital tubercle. Inhibits type II collagen expression in chondrocytes. The sequence is that of Protein Wnt-5a (Wnt5a) from Mus musculus (Mouse).